The sequence spans 137 residues: Ribonuclease VapC51 (137 aa).

The region spanning 5 to 120 (YLLDTSVIKR…HYDADFDLIA (116 aa)) is the PINc domain. Mg(2+) contacts are provided by D8 and D95.

Belongs to the PINc/VapC protein family. Mg(2+) serves as cofactor.

Functionally, toxic component of a type II toxin-antitoxin (TA) system. An RNase. Its cognate antitoxin is VapB51. In Mycobacterium tuberculosis (strain ATCC 25618 / H37Rv), this protein is Ribonuclease VapC51.